A 304-amino-acid chain; its full sequence is MSWIERIKSNITPTRKASIPEGVWTKCDSCGQVLYRAELERNLEVCPKCDHHMRMTARNRLHSLLDEGSLVELGSELEPKDELKFRDSKKYKDRLASAQKETGEKDALVVMKGTLYGMPVVAAAFEFAFMGVSMGSVVGARFVRAVEQAQEDNCPLICFSASGGARMQEALMSLMQMAKTSAALAKMQERGLPYISVLTDPTMGGVSASFAMLGDLNIAEPKALIGFAGPRVIEQTVREKLPPRFQRSEFLIEKGAIDMIVRRPEMRLKLASILAKLMNLPAPNPEAPREGVVVPPVPDQEPEA.

One can recognise a CoA carboxyltransferase N-terminal domain in the interval 23 to 292 (VWTKCDSCGQ…PNPEAPREGV (270 aa)). Residues cysteine 27, cysteine 30, cysteine 46, and cysteine 49 each contribute to the Zn(2+) site. The C4-type zinc-finger motif lies at 27-49 (CDSCGQVLYRAELERNLEVCPKC). Positions 284–304 (NPEAPREGVVVPPVPDQEPEA) are disordered. A compositionally biased stretch (pro residues) spans 295–304 (PPVPDQEPEA).

Belongs to the AccD/PCCB family. In terms of assembly, acetyl-CoA carboxylase is a heterohexamer composed of biotin carboxyl carrier protein (AccB), biotin carboxylase (AccC) and two subunits each of ACCase subunit alpha (AccA) and ACCase subunit beta (AccD). Zn(2+) serves as cofactor.

The protein resides in the cytoplasm. It carries out the reaction N(6)-carboxybiotinyl-L-lysyl-[protein] + acetyl-CoA = N(6)-biotinyl-L-lysyl-[protein] + malonyl-CoA. It participates in lipid metabolism; malonyl-CoA biosynthesis; malonyl-CoA from acetyl-CoA: step 1/1. In terms of biological role, component of the acetyl coenzyme A carboxylase (ACC) complex. Biotin carboxylase (BC) catalyzes the carboxylation of biotin on its carrier protein (BCCP) and then the CO(2) group is transferred by the transcarboxylase to acetyl-CoA to form malonyl-CoA. The sequence is that of Acetyl-coenzyme A carboxylase carboxyl transferase subunit beta from Shigella flexneri serotype 5b (strain 8401).